A 529-amino-acid chain; its full sequence is GMP synthase [glutamine-hydrolyzing] (529 aa).

The 202-residue stretch at 3–204 folds into the Glutamine amidotransferase type-1 domain; that stretch reads TVAIVDFGSQ…FLKIAGCTRD (202 aa). Cys87 functions as the Nucleophile in the catalytic mechanism. Catalysis depends on residues His179 and Glu181. In terms of domain architecture, GMPS ATP-PPase spans 205–395; the sequence is WTMGSFLHTQ…LGLPSAILDR (191 aa). 232 to 238 provides a ligand contact to ATP; that stretch reads SGGVDSS.

In terms of assembly, homodimer.

It carries out the reaction XMP + L-glutamine + ATP + H2O = GMP + L-glutamate + AMP + diphosphate + 2 H(+). The protein operates within purine metabolism; GMP biosynthesis; GMP from XMP (L-Gln route): step 1/1. Catalyzes the synthesis of GMP from XMP. The sequence is that of GMP synthase [glutamine-hydrolyzing] from Anaplasma marginale (strain St. Maries).